The following is a 557-amino-acid chain: Leucine-rich glioma-inactivated protein 1 (557 aa).

Residues 1-34 (MESERSKRMGNACIPLKRIAYFLCLLSALLLTEG) form the signal peptide. An LRRNT domain is found at 35 to 72 (KKPAKPKCPAVCTCTKDNALCENARSIPRTVPPDVISL). LRR repeat units follow at residues 92-113 (SLQL…AFIG), 116-137 (HLEY…TFRG), and 140-161 (SLIH…IFKG). Positions 173–223 (NSFNCDCKLKWLVEWLGHTNATVEDIYCEGPPEYKKRKINSLSSKDFDCII) constitute an LRRCT domain. The N-linked (GlcNAc...) asparagine glycan is linked to asparagine 192. 7 EAR repeats span residues 225-267 (EFAK…EWDH), 271-313 (TFRN…KRDS), 317-364 (KFIK…KWNG), 366-415 (GFYS…QWNK), 419-462 (LFTN…KWGG), 464-506 (SFQD…NWDA), and 510-552 (KFVK…KHVI). N-linked (GlcNAc...) asparagine glycosylation occurs at asparagine 277. Asparagine 422 is a glycosylation site (N-linked (GlcNAc...) asparagine).

As to quaternary structure, oligomer. Interacts with KCNA1 within a complex containing KCNA1, KCNA4 and KCNAB1. Part of a complex containing ADAM22, DLG4/PSD95 and CACNG2 (stargazin). Can bind to ADAM11 and ADAM23. Glycosylated.

The protein localises to the secreted. Its subcellular location is the synapse. It is found in the cytoplasm. Its function is as follows. Regulates voltage-gated potassium channels assembled from KCNA1, KCNA4 and KCNAB1. It slows down channel inactivation by precluding channel closure mediated by the KCNAB1 subunit. Ligand for ADAM22 that positively regulates synaptic transmission mediated by AMPA-type glutamate receptors. Plays a role in suppressing the production of MMP1/3 through the phosphatidylinositol 3-kinase/ERK pathway. The protein is Leucine-rich glioma-inactivated protein 1 (LGI1) of Pongo abelii (Sumatran orangutan).